Here is a 493-residue protein sequence, read N- to C-terminus: Cobyric acid synthase (493 aa).

Residues proline 246–phenylalanine 440 form the GATase cobBQ-type domain. The Nucleophile role is filled by cysteine 326. Histidine 432 is an active-site residue.

This sequence belongs to the CobB/CobQ family. CobQ subfamily.

It functions in the pathway cofactor biosynthesis; adenosylcobalamin biosynthesis. Its function is as follows. Catalyzes amidations at positions B, D, E, and G on adenosylcobyrinic A,C-diamide. NH(2) groups are provided by glutamine, and one molecule of ATP is hydrogenolyzed for each amidation. The polypeptide is Cobyric acid synthase (Clostridium botulinum (strain Loch Maree / Type A3)).